Reading from the N-terminus, the 99-residue chain is MDIDAEDATKSGLHPIELCVYSLLSGNLESIYQSINELRESQAVLILRLKQLRETCKDEQDRINKYCSLNAEIERLDKLETKVDVVLKRYEKMVGSISE.

Positions 34-94 form a coiled coil; the sequence is SINELRESQA…VVLKRYEKMV (61 aa).

Belongs to the SNAPIN family. In terms of assembly, component of the biogenesis of lysosome-related organelles complex-1 (BLOC-1).

It is found in the endosome. In terms of biological role, component of the biogenesis of lysosome-related organelles complex-1 (BLOC-1), a complex involved in endosomal cargo sorting. This Kluyveromyces lactis (strain ATCC 8585 / CBS 2359 / DSM 70799 / NBRC 1267 / NRRL Y-1140 / WM37) (Yeast) protein is Biogenesis of lysosome-related organelles complex 1 subunit SNN1 (SNN1).